The chain runs to 203 residues: Protein GrpE (203 aa).

Belongs to the GrpE family. As to quaternary structure, homodimer.

The protein resides in the cytoplasm. Participates actively in the response to hyperosmotic and heat shock by preventing the aggregation of stress-denatured proteins, in association with DnaK and GrpE. It is the nucleotide exchange factor for DnaK and may function as a thermosensor. Unfolded proteins bind initially to DnaJ; upon interaction with the DnaJ-bound protein, DnaK hydrolyzes its bound ATP, resulting in the formation of a stable complex. GrpE releases ADP from DnaK; ATP binding to DnaK triggers the release of the substrate protein, thus completing the reaction cycle. Several rounds of ATP-dependent interactions between DnaJ, DnaK and GrpE are required for fully efficient folding. This Pseudoalteromonas translucida (strain TAC 125) protein is Protein GrpE.